Consider the following 290-residue polypeptide: Ribosomal RNA small subunit methyltransferase A (290 aa).

S-adenosyl-L-methionine-binding residues include Asn-27, Leu-29, Gly-54, Glu-75, Asp-100, and Asn-125.

Belongs to the class I-like SAM-binding methyltransferase superfamily. rRNA adenine N(6)-methyltransferase family. RsmA subfamily.

The protein resides in the cytoplasm. The enzyme catalyses adenosine(1518)/adenosine(1519) in 16S rRNA + 4 S-adenosyl-L-methionine = N(6)-dimethyladenosine(1518)/N(6)-dimethyladenosine(1519) in 16S rRNA + 4 S-adenosyl-L-homocysteine + 4 H(+). Its function is as follows. Specifically dimethylates two adjacent adenosines (A1518 and A1519) in the loop of a conserved hairpin near the 3'-end of 16S rRNA in the 30S particle. May play a critical role in biogenesis of 30S subunits. The protein is Ribosomal RNA small subunit methyltransferase A of Streptococcus pneumoniae (strain P1031).